A 189-amino-acid polypeptide reads, in one-letter code: Large ribosomal subunit protein uL10 (189 aa).

The protein belongs to the universal ribosomal protein uL10 family. As to quaternary structure, part of the ribosomal stalk of the 50S ribosomal subunit. The N-terminus interacts with L11 and the large rRNA to form the base of the stalk. The C-terminus forms an elongated spine to which L12 dimers bind in a sequential fashion forming a multimeric L10(L12)X complex.

Functionally, forms part of the ribosomal stalk, playing a central role in the interaction of the ribosome with GTP-bound translation factors. This Rippkaea orientalis (strain PCC 8801 / RF-1) (Cyanothece sp. (strain PCC 8801)) protein is Large ribosomal subunit protein uL10.